The chain runs to 147 residues: Protein-export protein SecB 2 (147 aa).

This sequence belongs to the SecB family. Homotetramer, a dimer of dimers. One homotetramer interacts with 1 SecA dimer.

It localises to the cytoplasm. In terms of biological role, one of the proteins required for the normal export of preproteins out of the cell cytoplasm. It is a molecular chaperone that binds to a subset of precursor proteins, maintaining them in a translocation-competent state. It also specifically binds to its receptor SecA. In Francisella tularensis subsp. novicida (strain U112), this protein is Protein-export protein SecB 2.